The chain runs to 216 residues: Neural cell adhesion molecule L1.2 (216 aa).

The 64-residue stretch at 1–64 folds into the Fibronectin type-III domain; the sequence is EFFIHYLRKD…QTAGARVMEV (64 aa). Residues 1–73 are Extracellular-facing; it reads EFFIHYLRKD…VKSGFVTESW (73 aa). N-linked (GlcNAc...) asparagine glycans are attached at residues Asn-22 and Asn-46. Residues 74-94 traverse the membrane as a helical segment; sequence FIGLISALVLLLLVLLILCFI. Residues 95–216 lie on the Cytoplasmic side of the membrane; it reads KRSKGGKYSV…GLPNSAALLD (122 aa). Disordered regions lie at residues 127 to 149 and 173 to 216; these read YRSLESDNEEKRTASQPSLCEDS and DESL…ALLD. Residues 128–139 are compositionally biased toward basic and acidic residues; sequence RSLESDNEEKRT.

This sequence belongs to the immunoglobulin superfamily. L1/neurofascin/NgCAM family. As to expression, expressed in many postmitotic neurons in 16-36 hours embryos. Little or no expression in the olfactory placode, the anterior lateral line/acoustic ganglia complex, the posterior lateral line ganglion, late-developing hindbrain neurons and some Rohon-Beard cells in the spinal cord.

The protein localises to the cell membrane. It localises to the cell projection. Its subcellular location is the growth cone. Cell adhesion molecule with an important role in the development of the nervous system. Involved in neuron-neuron adhesion, neurite fasciculation, outgrowth of neurites, etc. Binds to axonin on neurons. The protein is Neural cell adhesion molecule L1.2 (nadl1.2) of Danio rerio (Zebrafish).